The following is a 432-amino-acid chain: Probable protein phosphatase 2C 75 (432 aa).

A PPM-type phosphatase domain is found at 44-356 (VACLFTRQGK…DDCAVVCLFL (313 aa)). The Mn(2+) site is built by D80, G81, D301, and D347. The tract at residues 372–408 (SPRMPALSGITRPNSKRVTPDDVDDGSDSNVSGDERS) is disordered.

It belongs to the PP2C family. Requires Mg(2+) as cofactor. The cofactor is Mn(2+).

It carries out the reaction O-phospho-L-seryl-[protein] + H2O = L-seryl-[protein] + phosphate. The catalysed reaction is O-phospho-L-threonyl-[protein] + H2O = L-threonyl-[protein] + phosphate. This is Probable protein phosphatase 2C 75 from Oryza sativa subsp. japonica (Rice).